Reading from the N-terminus, the 308-residue chain is MAEKSKILIIGGTGYIGKFVVEASAKAGHPTFVLVRESTVSDPAKGKIVESFNNSGVTILYGDLYDHESLVKAIKQVDVVISTVGQMQLADQTKIIAAIKEAGNIKRFFPSEFGMDVDKVNAVEPAKSTFAIKVQIRRAIEAEGIPYTYVSSNCFAGYFLPTLVQPGATDPPRDKVIISGDGNAKAVFNEEHDIGTYTIKAVDDPRTLNKTLYIKPPKNTLSFNELVAIWEKLIGKTLEKIYIPEEQILKDIATSPIPINIILAINHSTFVKGDQTNFVIEPSFGVEASELYPDVKYTTVEEYLSHFA.

NADP(+) is bound by residues 13–16 (TGYI), 35–45 (VRESTVSDPAK), Arg36, 86–88 (QMQ), 111–113 (SEF), Lys133, and 153–155 (NCF). The active-site Proton donor/acceptor is Lys133.

This sequence belongs to the NmrA-type oxidoreductase family. As to expression, in flowers, mostly expressed in limbs, and, to a lower extent, in tubes.

It carries out the reaction eugenol + a carboxylate + NADP(+) = a coniferyl ester + NADPH. The catalysed reaction is eugenol + acetate + NADP(+) = (E)-coniferyl acetate + NADPH. The protein operates within aromatic compound metabolism; phenylpropanoid biosynthesis. Functionally, involved in the biosynthesis of the floral volatile eugenol. Catalyzes the synthesis of the phenylpropene eugenol from coniferyl acetate. Phenylpropenes are produced by plants as defense compounds with antimicrobial and antianimal properties, or as floral attractants of pollinators. The protein is Eugenol synthase 1 of Petunia hybrida (Petunia).